Here is a 579-residue protein sequence, read N- to C-terminus: Adenine deaminase (579 aa).

Belongs to the metallo-dependent hydrolases superfamily. Adenine deaminase family. Requires Mn(2+) as cofactor.

The enzyme catalyses adenine + H2O + H(+) = hypoxanthine + NH4(+). The chain is Adenine deaminase from Listeria innocua serovar 6a (strain ATCC BAA-680 / CLIP 11262).